The following is a 377-amino-acid chain: Chaperone protein DnaJ (377 aa).

The region spanning 5–70 is the J domain; it reads DYYEILGVSK…QKRAAYDQYG (66 aa). A CR-type zinc finger spans residues 132-210; that stretch reads GVTKEIRIPT…CHGHGRVEKT (79 aa). The Zn(2+) site is built by Cys-145, Cys-148, Cys-162, Cys-165, Cys-184, Cys-187, Cys-198, and Cys-201. CXXCXGXG motif repeat units follow at residues 145-152, 162-169, 184-191, and 198-205; these read CDVCHGSG, CPTCHGAG, CPHCQGRG, and CNKCHGHG.

The protein belongs to the DnaJ family. In terms of assembly, homodimer. It depends on Zn(2+) as a cofactor.

Its subcellular location is the cytoplasm. In terms of biological role, participates actively in the response to hyperosmotic and heat shock by preventing the aggregation of stress-denatured proteins and by disaggregating proteins, also in an autonomous, DnaK-independent fashion. Unfolded proteins bind initially to DnaJ; upon interaction with the DnaJ-bound protein, DnaK hydrolyzes its bound ATP, resulting in the formation of a stable complex. GrpE releases ADP from DnaK; ATP binding to DnaK triggers the release of the substrate protein, thus completing the reaction cycle. Several rounds of ATP-dependent interactions between DnaJ, DnaK and GrpE are required for fully efficient folding. Also involved, together with DnaK and GrpE, in the DNA replication of plasmids through activation of initiation proteins. The chain is Chaperone protein DnaJ from Klebsiella pneumoniae (strain 342).